The sequence spans 89 residues: Elongation factor 1-beta (89 aa).

This sequence belongs to the EF-1-beta/EF-1-delta family.

Functionally, promotes the exchange of GDP for GTP in EF-1-alpha/GDP, thus allowing the regeneration of EF-1-alpha/GTP that could then be used to form the ternary complex EF-1-alpha/GTP/AAtRNA. The polypeptide is Elongation factor 1-beta (ef1b) (Methanothermobacter thermautotrophicus (strain ATCC 29096 / DSM 1053 / JCM 10044 / NBRC 100330 / Delta H) (Methanobacterium thermoautotrophicum)).